A 92-amino-acid chain; its full sequence is YcgL domain-containing protein Sfri_1738 (92 aa).

A YcgL domain is found at Met-1–Lys-85.

The protein is YcgL domain-containing protein Sfri_1738 of Shewanella frigidimarina (strain NCIMB 400).